The following is a 136-amino-acid chain: Small ribosomal subunit protein uS9 (136 aa).

A disordered region spans residues 97 to 136; it reads SPDNRKPLKTEGHLSRDPRAKERRKYGLKKARKAPQFSKR. Basic and acidic residues predominate over residues 98–116; it reads PDNRKPLKTEGHLSRDPRA. Residues 117–136 are compositionally biased toward basic residues; that stretch reads KERRKYGLKKARKAPQFSKR.

The protein belongs to the universal ribosomal protein uS9 family.

The sequence is that of Small ribosomal subunit protein uS9 from Prochlorococcus marinus (strain MIT 9301).